The chain runs to 240 residues: Guanine nucleotide exchange factor sopE2 (240 aa).

The GEF catalytic domain stretch occupies residues 78-240 (LTSKTVKDFM…IANKYLQNAS (163 aa)).

It belongs to the GEF (guanine exchange factor) SopE family.

It localises to the secreted. In terms of biological role, activator for CDC42 by directly engaging this Rho GTPase and acting as potent guanine nucleotide exchange factor (GEF). This activation results in actin cytoskeleton rearrangements and stimulates membrane ruffling, promoting bacterial entry into non-phagocytic cells. Chaperone InvB is required for secretion, translocation and stabilization of intracellular levels of sopE2. The chain is Guanine nucleotide exchange factor sopE2 (sopE2) from Salmonella paratyphi A (strain ATCC 9150 / SARB42).